Here is a 346-residue protein sequence, read N- to C-terminus: tRNA N6-adenosine threonylcarbamoyltransferase (346 aa).

The Fe cation site is built by histidine 111 and histidine 115. Substrate is bound by residues 134–138, aspartate 167, glycine 180, aspartate 184, and asparagine 279; that span reads LVSGG. Residue aspartate 307 participates in Fe cation binding.

Belongs to the KAE1 / TsaD family. Fe(2+) serves as cofactor.

The protein resides in the cytoplasm. The catalysed reaction is L-threonylcarbamoyladenylate + adenosine(37) in tRNA = N(6)-L-threonylcarbamoyladenosine(37) in tRNA + AMP + H(+). In terms of biological role, required for the formation of a threonylcarbamoyl group on adenosine at position 37 (t(6)A37) in tRNAs that read codons beginning with adenine. Is involved in the transfer of the threonylcarbamoyl moiety of threonylcarbamoyl-AMP (TC-AMP) to the N6 group of A37, together with TsaE and TsaB. TsaD likely plays a direct catalytic role in this reaction. In Gloeothece citriformis (strain PCC 7424) (Cyanothece sp. (strain PCC 7424)), this protein is tRNA N6-adenosine threonylcarbamoyltransferase.